The sequence spans 469 residues: SWI/SNF complex subunit SWI3B (469 aa).

The disordered stretch occupies residues 1-42 (MAMKAPDPGGSGEILPSTPSLSETTSGGAAAASKSAQLPSSS). The segment covering 15 to 42 (LPSTPSLSETTSGGAAAASKSAQLPSSS) has biased composition (low complexity). The 98-residue stretch at 48-145 (IHVPSYSSWF…YNSSASAKPL (98 aa)) folds into the SWIRM domain. One can recognise an SANT domain in the interval 223-274 (ESKPEWSDKEILLLLEAVMHYGDDWKKVASHVIGRTEKDCVSQFVKLPFGEQ). 2 stretches are compositionally biased toward basic and acidic residues: residues 293–306 (DSDI…DKDG) and 360–369 (DKNASRDPNR). 2 disordered regions span residues 293-314 (DSDI…KRIK) and 360-387 (DKNA…ESER). Residues 370–380 (QDANAASSGET) show a composition bias toward polar residues. Residues 423 to 447 (VHFEKLDLEMERSRKQLEEVRNLLF) are a coiled coil.

In terms of assembly, homodimers and heterodimers. Interacts with SWI3A, SWI3C, SWI3D, BSH, BRM and FCA (via C-terminus), and (via N-terminus) with HAB1. Interacts with MORC6 and SUVH9. Expressed in roots, stems, leaves, flowers and siliques.

Its subcellular location is the nucleus. Its function is as follows. Component of a multiprotein complex equivalent of the SWI/SNF complex, an ATP-dependent chromatin-remodeling complex, which is required for the positive and negative regulation of gene expression of a large number of genes. It changes chromatin structure by altering DNA-histone contacts within a nucleosome, leading eventually to a change in nucleosome position, thus facilitating or repressing binding of gene-specific transcription factors. May play an essential role in the transition from the vegetative to the reproductive phase of development. May be a positive regulator of ABA signaling. The chain is SWI/SNF complex subunit SWI3B (SWI3B) from Arabidopsis thaliana (Mouse-ear cress).